The sequence spans 377 residues: EPS I polysaccharide export outer membrane protein EpsA (377 aa).

Positions 1 to 23 (MFVSIPSIRKTVMSLCAVPLMAA) are cleaved as a signal peptide. C24 is lipidated: N-palmitoyl cysteine. A lipid anchor (S-diacylglycerol cysteine) is attached at C24.

It belongs to the BexD/CtrA/VexA family.

The protein resides in the cell outer membrane. Functionally, probably involved in polymerization and/or export of exopolysaccharide EPS I which functions as a virulence factor. This chain is EPS I polysaccharide export outer membrane protein EpsA (epsA), found in Ralstonia solanacearum (Pseudomonas solanacearum).